The primary structure comprises 105 residues: Integration host factor (105 aa).

Residues 64 to 71 carry the H2TH motif, binds DNA motif; sequence LPKVGKVK. The segment at 82–94 is lid, binds DNA; that stretch reads APTRRLRGLGDRQ.

Belongs to the actinobacterial IHF (aIHF) family. In terms of assembly, binds DNA as a monomer. As to quaternary structure, (Microbial infection) Forms a complex with L5 Int and attP DNA. The complex binds attB to form products.

The protein resides in the cytoplasm. Its subcellular location is the nucleoid. Its function is as follows. A nucleoid-associated protein (NAP) that binds DNA without any sequence specificity. Compacts DNA. Binds along the whole chromosome in a dynamic manner, has equal affinity for the oriC site, attB and a randon 62% GC-rich sequence. Plays a role in transcription regulation. Functionally, (Microbial infection) Stimulates temperate Mycobacterium phage L5 Int-mediated recombination in vitro using supercoiled attP (phage attachment site) DNA, linear attB DNA (bacterial attachment site) and L5 integrase (L5 Int or Int-L5, AC P22884). mIHF acts on L5 Int to stimulate formation of a specific intasome complex. mIHF probably stabilizes a sharp bend in the DNA during phage integration. This is Integration host factor from Mycolicibacterium smegmatis (strain ATCC 700084 / mc(2)155) (Mycobacterium smegmatis).